The primary structure comprises 290 residues: Dehydrodolichyl diphosphate synthase CPT3 (290 aa).

Residue Asp-42 is part of the active site.

Belongs to the UPP synthase family. It depends on Mg(2+) as a cofactor. In terms of tissue distribution, expressed in leaf trichomes and stem trichomes. Expressed at low levels in young leaves, stems and old leaves.

The protein resides in the cytoplasm. Its subcellular location is the cytosol. The catalysed reaction is n isopentenyl diphosphate + (2E,6E)-farnesyl diphosphate = a di-trans,poly-cis-polyprenyl diphosphate + n diphosphate. Catalyzes cis-prenyl chain elongation to produce the polyprenyl backbone of dolichol, a glycosyl carrier-lipid required for the biosynthesis of several classes of glycoprotein. The chain is Dehydrodolichyl diphosphate synthase CPT3 from Solanum lycopersicum (Tomato).